The following is a 264-amino-acid chain: Glutamate racemase (264 aa).

Residues 9-10 (DS) and 41-42 (YG) each bind substrate. The Proton donor/acceptor role is filled by C72. 73–74 (NT) is a binding site for substrate. Catalysis depends on C183, which acts as the Proton donor/acceptor. 184-185 (TH) contributes to the substrate binding site.

It belongs to the aspartate/glutamate racemases family.

It catalyses the reaction L-glutamate = D-glutamate. It participates in cell wall biogenesis; peptidoglycan biosynthesis. Its function is as follows. Provides the (R)-glutamate required for cell wall biosynthesis. The sequence is that of Glutamate racemase from Geobacillus sp. (strain WCH70).